We begin with the raw amino-acid sequence, 268 residues long: Protein limb expression 1 homolog (268 aa).

Belongs to the LIX1 family. As to quaternary structure, interacts with ft (via intracellular domain) and ds (via intracellular domain).

The protein localises to the apical cell membrane. Its subcellular location is the cytoplasm. In terms of biological role, component of the Fat (ft) signaling pathway that functions in normal development of various organs such as the wing and leg. In developing imaginal disks, involved in regulating both the protein levels and apical localization of ft and ds. Involved in establishing planar cell polarity (PCP) along the anterior-posterior axis of the wing (the early Fz signaling event), probably by acting upstream of ds and ft to regulate Fz activity. This is Protein limb expression 1 homolog from Drosophila melanogaster (Fruit fly).